The sequence spans 125 residues: Large ribosomal subunit protein uL18 (125 aa).

It belongs to the universal ribosomal protein uL18 family. As to quaternary structure, part of the 50S ribosomal subunit; part of the 5S rRNA/L5/L18/L25 subcomplex. Contacts the 5S and 23S rRNAs.

Functionally, this is one of the proteins that bind and probably mediate the attachment of the 5S RNA into the large ribosomal subunit, where it forms part of the central protuberance. This Anaplasma marginale (strain Florida) protein is Large ribosomal subunit protein uL18.